The chain runs to 138 residues: Large ribosomal subunit protein uL16 (138 aa).

The segment covering Met1 to Gln13 has biased composition (basic residues). Residues Met1–Leu20 form a disordered region.

This sequence belongs to the universal ribosomal protein uL16 family. In terms of assembly, part of the 50S ribosomal subunit.

In terms of biological role, binds 23S rRNA and is also seen to make contacts with the A and possibly P site tRNAs. The polypeptide is Large ribosomal subunit protein uL16 (Bordetella avium (strain 197N)).